The chain runs to 384 residues: DNA replication and repair protein RecF (384 aa).

Glycine 43–threonine 50 is a binding site for ATP.

The protein belongs to the RecF family.

The protein localises to the cytoplasm. The RecF protein is involved in DNA metabolism; it is required for DNA replication and normal SOS inducibility. RecF binds preferentially to single-stranded, linear DNA. It also seems to bind ATP. The polypeptide is DNA replication and repair protein RecF (Brucella abortus (strain 2308)).